Reading from the N-terminus, the 200-residue chain is uncharacterized protein (200 aa).

The AMMECR1 domain occupies 1–191; it reads MTSANIQMAV…LDYKDYVNYK (191 aa).

This is an uncharacterized protein from Caenorhabditis elegans.